The sequence spans 442 residues: tRNA modification GTPase MnmE (442 aa).

(6S)-5-formyl-5,6,7,8-tetrahydrofolate-binding residues include R21, E79, and K118. Residues 215-365 (GLKIAIVGKP…LENKLSSYCN (151 aa)) form the TrmE-type G domain. Residues 225 to 230 (NVGKSS), 244 to 250 (TNEAGTT), and 269 to 272 (DTAG) each bind GTP. Mg(2+) is bound by residues S229 and T250. (6S)-5-formyl-5,6,7,8-tetrahydrofolate is bound at residue K442.

This sequence belongs to the TRAFAC class TrmE-Era-EngA-EngB-Septin-like GTPase superfamily. TrmE GTPase family. In terms of assembly, homodimer. Heterotetramer of two MnmE and two MnmG subunits. It depends on K(+) as a cofactor.

The protein localises to the cytoplasm. Its function is as follows. Exhibits a very high intrinsic GTPase hydrolysis rate. Involved in the addition of a carboxymethylaminomethyl (cmnm) group at the wobble position (U34) of certain tRNAs, forming tRNA-cmnm(5)s(2)U34. In Mycoplasma mobile (strain ATCC 43663 / 163K / NCTC 11711) (Mesomycoplasma mobile), this protein is tRNA modification GTPase MnmE.